The sequence spans 446 residues: MSNFNFDFAENDFGPLAAKMRPTSLEQYFGQSHLIGEGKPLRKAIQAGHIYSMIFWGPPGTGKTTLAEIIAQRINAEVERISAVTSGIKEIREAIDRAKQNRLADRKTILFVDEVHRFNKSQQDAFLPHIEDGTVIFIGATTENPSFELNNALLSRARVYVLKSLTTAEIEQVLQQAVEDPKRGLGKERLILEENLLQVLAEYVNGDARLALNCLELMVDMADETENGKKIDRTLLKEVLGERQARFDKQGDRFYDLISALHKSVRGSAPDAALYWYARILTAGGDPLYVARRLLAIASEDVGNADPRAMQVALAAWDCFSRVGAYEGERAIAQAIIYLSVAPKSNAVYTAFNTAKQQAKDLPDYDVPPHLRNAPTNLMKELGYGTEYRYAHDEPNAYAAGENYFPPELKDTQYYFPTNRGMEIQIKEKLERLREQDKSAVKKRYK.

Position 57–64 (57–64 (GPPGTGKT)) interacts with ATP.

Belongs to the AAA ATPase family. RarA/MGS1/WRNIP1 subfamily.

Functionally, DNA-dependent ATPase that plays important roles in cellular responses to stalled DNA replication processes. This is Replication-associated recombination protein A (rarA) from Haemophilus influenzae (strain ATCC 51907 / DSM 11121 / KW20 / Rd).